The chain runs to 299 residues: 4-hydroxybenzoate octaprenyltransferase (299 aa).

8 helical membrane passes run V33 to V53, W56 to I76, N105 to N125, L151 to I171, W180 to V200, A214 to L234, H247 to A267, and A278 to T298.

It belongs to the UbiA prenyltransferase family. The cofactor is Mg(2+).

The protein resides in the cell inner membrane. The catalysed reaction is all-trans-octaprenyl diphosphate + 4-hydroxybenzoate = 4-hydroxy-3-(all-trans-octaprenyl)benzoate + diphosphate. Its pathway is cofactor biosynthesis; ubiquinone biosynthesis. Its function is as follows. Catalyzes the prenylation of para-hydroxybenzoate (PHB) with an all-trans polyprenyl group. Mediates the second step in the final reaction sequence of ubiquinone-8 (UQ-8) biosynthesis, which is the condensation of the polyisoprenoid side chain with PHB, generating the first membrane-bound Q intermediate 3-octaprenyl-4-hydroxybenzoate. In Xylella fastidiosa (strain M23), this protein is 4-hydroxybenzoate octaprenyltransferase.